The following is a 637-amino-acid chain: Threonine--tRNA ligase (637 aa).

Positions 1–61 constitute a TGS domain; sequence MLNITLPDCS…VEDSAVQIIT (61 aa). The tract at residues 242–533 is catalytic; it reads DHRKLGKQLD…LIENHAGSFP (292 aa). 3 residues coordinate Zn(2+): C333, H384, and H510.

This sequence belongs to the class-II aminoacyl-tRNA synthetase family. As to quaternary structure, homodimer. It depends on Zn(2+) as a cofactor.

It localises to the cytoplasm. The catalysed reaction is tRNA(Thr) + L-threonine + ATP = L-threonyl-tRNA(Thr) + AMP + diphosphate + H(+). Catalyzes the attachment of threonine to tRNA(Thr) in a two-step reaction: L-threonine is first activated by ATP to form Thr-AMP and then transferred to the acceptor end of tRNA(Thr). Also edits incorrectly charged L-seryl-tRNA(Thr). This is Threonine--tRNA ligase from Neisseria gonorrhoeae (strain ATCC 700825 / FA 1090).